Reading from the N-terminus, the 205-residue chain is MLILAGLGNPEPKYEKNRHNVGFMAVDALARKWGTAPWRARFQGLACEGQVSTPDGPVKLLLLKPKTYYNESGRAVGEAMKFFKLQPTDVIVFHDEIDMAPGRFRMKSGGGAAGNNGIRSVTSQVGDAFRRGRIGVGHPGHKDAVMHYVLGDFHKVEHQWLDPILDAIADALPFAAVGDDERYQAEVMRLAPAPKADPRKPAKDD.

Residue Y14 participates in tRNA binding. The active-site Proton acceptor is the H19. 3 residues coordinate tRNA: Y68, N70, and N116.

It belongs to the PTH family. Monomer.

The protein localises to the cytoplasm. The enzyme catalyses an N-acyl-L-alpha-aminoacyl-tRNA + H2O = an N-acyl-L-amino acid + a tRNA + H(+). Its function is as follows. Hydrolyzes ribosome-free peptidyl-tRNAs (with 1 or more amino acids incorporated), which drop off the ribosome during protein synthesis, or as a result of ribosome stalling. Functionally, catalyzes the release of premature peptidyl moieties from peptidyl-tRNA molecules trapped in stalled 50S ribosomal subunits, and thus maintains levels of free tRNAs and 50S ribosomes. The chain is Peptidyl-tRNA hydrolase from Caulobacter vibrioides (strain ATCC 19089 / CIP 103742 / CB 15) (Caulobacter crescentus).